The primary structure comprises 205 residues: Proteasome subunit beta (205 aa).

The propeptide at 1–8 (MDDKQYKG) is removed in mature form; by autocatalysis. Thr9 functions as the Nucleophile in the catalytic mechanism.

This sequence belongs to the peptidase T1B family. The 20S proteasome core is composed of 14 alpha and 14 beta subunits that assemble into four stacked heptameric rings, resulting in a barrel-shaped structure. The two inner rings, each composed of seven catalytic beta subunits, are sandwiched by two outer rings, each composed of seven alpha subunits. The catalytic chamber with the active sites is on the inside of the barrel. Has a gated structure, the ends of the cylinder being occluded by the N-termini of the alpha-subunits. Is capped at one or both ends by the proteasome regulatory ATPase, PAN.

The protein resides in the cytoplasm. It carries out the reaction Cleavage of peptide bonds with very broad specificity.. With respect to regulation, the formation of the proteasomal ATPase PAN-20S proteasome complex, via the docking of the C-termini of PAN into the intersubunit pockets in the alpha-rings, triggers opening of the gate for substrate entry. Interconversion between the open-gate and close-gate conformations leads to a dynamic regulation of the 20S proteasome proteolysis activity. Its function is as follows. Component of the proteasome core, a large protease complex with broad specificity involved in protein degradation. This is Proteasome subunit beta from Methanocella paludicola (strain DSM 17711 / JCM 13418 / NBRC 101707 / SANAE).